The following is a 371-amino-acid chain: Glutamate 5-kinase (371 aa).

Residue K8 participates in ATP binding. Residues S49, D136, and N149 each contribute to the substrate site. ATP is bound by residues T169 to D170 and T213 to K219. A PUA domain is found at T278–A356.

This sequence belongs to the glutamate 5-kinase family.

The protein localises to the cytoplasm. The enzyme catalyses L-glutamate + ATP = L-glutamyl 5-phosphate + ADP. It functions in the pathway amino-acid biosynthesis; L-proline biosynthesis; L-glutamate 5-semialdehyde from L-glutamate: step 1/2. In terms of biological role, catalyzes the transfer of a phosphate group to glutamate to form L-glutamate 5-phosphate. In Acaryochloris marina (strain MBIC 11017), this protein is Glutamate 5-kinase.